We begin with the raw amino-acid sequence, 266 residues long: Auxin-responsive protein IAA21 (266 aa).

Residues 24–28 carry the EAR-like (transcriptional repression) motif; that stretch reads LRLGL. Positions 27 to 50 are disordered; sequence GLPGTAEEAESEGGGGGGTDAAPL. The 103-residue stretch at 146–248 folds into the PB1 domain; the sequence is CLYVKVSMDG…SCRRLRIMKG (103 aa).

The protein belongs to the Aux/IAA family. As to quaternary structure, homodimers and heterodimers. Highly expressed in flowers. Expressed in roots and seedlings.

Its subcellular location is the nucleus. Functionally, aux/IAA proteins are short-lived transcriptional factors that function as repressors of early auxin response genes at low auxin concentrations. The sequence is that of Auxin-responsive protein IAA21 (IAA21) from Oryza sativa subsp. japonica (Rice).